The primary structure comprises 151 residues: Protein SprT-like (151 aa).

Residues 6-148 (LQALVERISL…FCRGKLKKIK (143 aa)) form the SprT-like domain. His-67 contacts Zn(2+). Residue Glu-68 is part of the active site. His-71 serves as a coordination point for Zn(2+).

This sequence belongs to the SprT family. The cofactor is Zn(2+).

It localises to the cytoplasm. This is Protein SprT-like from Anoxybacillus flavithermus (strain DSM 21510 / WK1).